A 924-amino-acid chain; its full sequence is Alpha-actinin, sarcomeric (924 aa).

Residues 1–250 (MMMENGLSME…IMTYVSCYYH (250 aa)) form an actin-binding region. 2 Calponin-homology (CH) domains span residues 34 to 138 (KQQK…LRFA) and 147 to 253 (MTAK…HAFQ). Spectrin repeat units lie at residues 251-395 (AFQG…TVSD), 396-510 (ISNS…RCQR), 511-631 (ICDQ…TAND), and 632-744 (MTRK…TMET). 2 consecutive EF-hand domains span residues 778 to 813 (EQLN…LGYS) and 819 to 854 (QGDL…ESTD). Residues aspartate 791, asparagine 793, threonine 795, arginine 797, and glutamate 802 each contribute to the Ca(2+) site.

The protein belongs to the alpha-actinin family. In terms of assembly, homodimer; antiparallel. Interacts with Smn; the interaction occurs in adult thoracic tissues. As to expression, larval muscle isoform is expressed in the larval body wall, adult muscles of the head and abdomen and supercontractile muscles of the larva and adult. Adult muscle isoform accumulates within adult fibrillar and tubular muscles.

Its subcellular location is the cytoplasm. It localises to the myofibril. The protein localises to the sarcomere. The protein resides in the z line. In terms of biological role, F-actin cross-linking protein which is thought to anchor actin to a variety of intracellular structures. This is a bundling protein. The protein is Alpha-actinin, sarcomeric (Actn) of Drosophila melanogaster (Fruit fly).